A 486-amino-acid chain; its full sequence is ATP-dependent 6-phosphofructokinase (486 aa).

ATP-binding positions include Gly105, 171–172 (RG), and 196–199 (GDGT). A Mg(2+)-binding site is contributed by Asp197. Residues 225–227 (TID), 270–272 (MGR), Glu323, and 378–381 (YMIR) each bind substrate. Asp227 acts as the Proton acceptor in catalysis. The short motif at 484 to 486 (SKV) is the Peroxisomal targeting signal element.

The protein belongs to the phosphofructokinase type A (PFKA) family. PPi-dependent PFK group II subfamily. Atypical ATP-dependent clade 'X' sub-subfamily. As to quaternary structure, homotetramer. Requires Mg(2+) as cofactor.

It is found in the glycosome. It catalyses the reaction beta-D-fructose 6-phosphate + ATP = beta-D-fructose 1,6-bisphosphate + ADP + H(+). The protein operates within carbohydrate degradation; glycolysis; D-glyceraldehyde 3-phosphate and glycerone phosphate from D-glucose: step 3/4. With respect to regulation, allosterically activated by AMP. Functionally, catalyzes the phosphorylation of D-fructose 6-phosphate to fructose 1,6-bisphosphate by ATP, the first committing step of glycolysis. The polypeptide is ATP-dependent 6-phosphofructokinase (Leishmania donovani).